The chain runs to 500 residues: L-arabinose isomerase (500 aa).

Mn(2+) contacts are provided by Glu306, Glu331, His348, and His447.

It belongs to the arabinose isomerase family. It depends on Mn(2+) as a cofactor.

The catalysed reaction is beta-L-arabinopyranose = L-ribulose. It functions in the pathway carbohydrate degradation; L-arabinose degradation via L-ribulose; D-xylulose 5-phosphate from L-arabinose (bacterial route): step 1/3. Its function is as follows. Catalyzes the conversion of L-arabinose to L-ribulose. This chain is L-arabinose isomerase, found in Anoxybacillus flavithermus (strain DSM 21510 / WK1).